The chain runs to 385 residues: uncharacterized protein (385 aa).

This is an uncharacterized protein from Caenorhabditis elegans.